The sequence spans 532 residues: Phosphoenolpyruvate carboxylase (532 aa).

This sequence belongs to the PEPCase type 2 family. As to quaternary structure, homotetramer. Mg(2+) serves as cofactor.

The enzyme catalyses oxaloacetate + phosphate = phosphoenolpyruvate + hydrogencarbonate. In terms of biological role, catalyzes the irreversible beta-carboxylation of phosphoenolpyruvate (PEP) to form oxaloacetate (OAA), a four-carbon dicarboxylic acid source for the tricarboxylic acid cycle. This chain is Phosphoenolpyruvate carboxylase, found in Methanopyrus kandleri (strain AV19 / DSM 6324 / JCM 9639 / NBRC 100938).